The primary structure comprises 165 residues: uncharacterized protein (165 aa).

Over residues 22–34 the composition is skewed to polar residues; sequence QQANQENMSSRTD. Positions 22-45 are disordered; the sequence is QQANQENMSSRTDSPIPPFGESEQ.

This is an uncharacterized protein from Homo sapiens (Human).